A 266-amino-acid polypeptide reads, in one-letter code: Probable matrix protein (266 aa).

A disordered region spans residues 158–177 (ACSAGTGGTEEGDSDTEEEP). The span at 167–177 (EEGDSDTEEEP) shows a compositional bias: acidic residues.

The protein localises to the virion. Functionally, may play a role in virion budding and release by binding the ribonucleocapsid and the host membrane. This is Probable matrix protein from Ixodidae (hardbacked ticks).